The following is a 408-amino-acid chain: LL-diaminopimelate aminotransferase (408 aa).

Residues Tyr-15 and Gly-42 each coordinate substrate. Residues Tyr-72, 108–109, Tyr-132, Asn-187, Tyr-218, and 246–248 contribute to the pyridoxal 5'-phosphate site; these read SK and SFS. Positions 109, 132, and 187 each coordinate substrate. At Lys-249 the chain carries N6-(pyridoxal phosphate)lysine. Residues Arg-257 and Asn-292 each coordinate pyridoxal 5'-phosphate. Positions 292 and 388 each coordinate substrate.

This sequence belongs to the class-I pyridoxal-phosphate-dependent aminotransferase family. LL-diaminopimelate aminotransferase subfamily. In terms of assembly, homodimer. Pyridoxal 5'-phosphate serves as cofactor.

The catalysed reaction is (2S,6S)-2,6-diaminopimelate + 2-oxoglutarate = (S)-2,3,4,5-tetrahydrodipicolinate + L-glutamate + H2O + H(+). It participates in amino-acid biosynthesis; L-lysine biosynthesis via DAP pathway; LL-2,6-diaminopimelate from (S)-tetrahydrodipicolinate (aminotransferase route): step 1/1. Involved in the synthesis of meso-diaminopimelate (m-DAP or DL-DAP), required for both lysine and peptidoglycan biosynthesis. Catalyzes the direct conversion of tetrahydrodipicolinate to LL-diaminopimelate. This chain is LL-diaminopimelate aminotransferase, found in Synechococcus sp. (strain CC9902).